The primary structure comprises 189 residues: Peptidyl-tRNA hydrolase (189 aa).

H15 contacts tRNA. H20 acts as the Proton acceptor in catalysis. Residues F66, N68, and N114 each contribute to the tRNA site.

Belongs to the PTH family. As to quaternary structure, monomer.

It is found in the cytoplasm. The enzyme catalyses an N-acyl-L-alpha-aminoacyl-tRNA + H2O = an N-acyl-L-amino acid + a tRNA + H(+). In terms of biological role, hydrolyzes ribosome-free peptidyl-tRNAs (with 1 or more amino acids incorporated), which drop off the ribosome during protein synthesis, or as a result of ribosome stalling. Its function is as follows. Catalyzes the release of premature peptidyl moieties from peptidyl-tRNA molecules trapped in stalled 50S ribosomal subunits, and thus maintains levels of free tRNAs and 50S ribosomes. The sequence is that of Peptidyl-tRNA hydrolase from Streptococcus equi subsp. equi (strain 4047).